The chain runs to 496 residues: Versicolorin B desaturase stcL (496 aa).

The helical transmembrane segment at 3 to 23 (FLSLPILTALGAVVYVLFQLV) threads the bilayer. Cysteine 440 contacts heme.

The protein belongs to the cytochrome P450 family. Heme serves as cofactor.

Its subcellular location is the membrane. The catalysed reaction is versicolorin B + NADPH + O2 + H(+) = versicolorin A + NADP(+) + 2 H2O. The protein operates within mycotoxin biosynthesis; sterigmatocystin biosynthesis. In terms of biological role, cytochrome P450 monooxygenase; part of the gene cluster that mediates the biosynthesis of sterigmatocystin (ST), a polyketide-derived furanocoumarin which is part of the most toxic and carcinogenic compounds among the known mycotoxins. The first step in the biosynthesis of sterigmatocystin is the production of hexanoate by the fatty acid synthase (FAS) units stcJ and stcK. The polyketide backbone is assembled by the non-reducing polyketide synthase stcA by condensation of the starter hexanoyl-CoA and 7 malonyl-CoA extender units followed by cyclization and release of norsolorinic acid. Norsolorinic acid is the first stable intermediate in the biosynthesis of sterigmatocystin and is converted into averantin (AVN) by the ketoreductase stcE which reduces the hexanoate ketone to an alcohol. Averantin is then oxidized into 5'-hydroxyaverantin (HAVN) by the cytochrome P450 monooxygenase stcF. 5'-hydroxyaverantin is further converted to 5'-oxyaverantin (OAVN) by the 5'-hydroxyaverantin dehydrogenase stcG. The next step is the conversion of OAVN into averufin (AVF) which is catalyzed by a yet to be identified enzyme. The cytochrome P450 monooxygenase stcB and the flavin-binding monooxygenase stcW are both required for the conversion of averufin to 1-hydroxyversicolorone. The esterase stcI probably catalyzes the formation of versiconal hemiacetal acetate from 1-hydroxyversicolorone. The oxydoreductase stcN then probably catalyzes the biosynthetic step from versiconal to versicolorin B (VERB). The next step is performed by the versicolorin B desaturase stcL to produce versicolorin A (VERA). The ketoreductase stcU and the cytochrome P450 monooxygenase stcS are involved in the conversion of versicolorin A to demethylsterigmatocystin. The Baeyer-Villiger oxidas stcQ and the reductase stcR might be involved in the biosynthetic step from versicolorin A to demethylsterigmatocystin. The final step in the biosynthesis of sterigmatocystin is the methylation of demethylsterigmatocystin catalyzed by the methyltransferase stcP. The protein is Versicolorin B desaturase stcL of Emericella nidulans (strain FGSC A4 / ATCC 38163 / CBS 112.46 / NRRL 194 / M139) (Aspergillus nidulans).